We begin with the raw amino-acid sequence, 184 residues long: Ras-related protein O-Krev (184 aa).

A GTP-binding site is contributed by 10 to 17; it reads GSGGVGKS. Residues 32-40 carry the Effector region motif; that stretch reads YDPTIEDSY. GTP is bound by residues 57–61 and 116–119; these read DTAGT and NKCD. Cysteine 181 carries the cysteine methyl ester modification. A lipid anchor (S-geranylgeranyl cysteine) is attached at cysteine 181. Positions 182–184 are cleaved as a propeptide — removed in mature form; that stretch reads TLL.

Belongs to the small GTPase superfamily. Ras family.

The protein resides in the cell membrane. It catalyses the reaction GTP + H2O = GDP + phosphate + H(+). This is Ras-related protein O-Krev from Diplobatis ommata (Ocellated electric ray).